The following is a 335-amino-acid chain: 3-ketodihydrosphingosine reductase TSC10 (335 aa).

9 residues coordinate NADPH: Gly42, Ser44, Ser45, Gly46, Arg67, Asp68, Lys71, Asp95, and Leu96. Residues 42-46 (GGSSG) carry the GXSXG motif. The tract at residues 141-207 (LKDGLDGVYW…RGLSDALRSE (67 aa)) is involved in homodimer formation. Tyr190 serves as the catalytic Proton acceptor. NADP(+) is bound by residues Tyr190, Lys194, and Ile223. The Lowers pKa of active site Tyr role is filled by Lys194. A helical transmembrane segment spans residues 288 to 308 (TNNFLLDTLWLIVSSVGVPIW).

Belongs to the short-chain dehydrogenases/reductases (SDR) family. In terms of assembly, homodimer; a minor portion forms homotetramers.

The protein resides in the endoplasmic reticulum membrane. The enzyme catalyses sphinganine + NADP(+) = 3-oxosphinganine + NADPH + H(+). The protein operates within lipid metabolism; sphingolipid metabolism. In terms of biological role, catalyzes the reduction of 3'-oxosphinganine (3-ketodihydrosphingosine/KDS) to sphinganine (dihydrosphingosine/DHS), the second step of de novo sphingolipid biosynthesis. This Cryptococcus neoformans var. neoformans serotype D (strain JEC21 / ATCC MYA-565) (Filobasidiella neoformans) protein is 3-ketodihydrosphingosine reductase TSC10 (TSC10).